We begin with the raw amino-acid sequence, 472 residues long: Ribosomal protein uS12 methylthiotransferase RimO (472 aa).

The MTTase N-terminal domain maps to 33–143 (NRIGFVSLGC…VLKHVHKYVP (111 aa)). The [4Fe-4S] cluster site is built by Cys42, Cys78, Cys107, Cys175, Cys179, and Cys182. Residues 161–398 (LTPKHYAYLK…MELQAEISAE (238 aa)) enclose the Radical SAM core domain. Residues 401–467 (ARFVGRTLDI…EHDLWAEVVD (67 aa)) enclose the TRAM domain.

It belongs to the methylthiotransferase family. RimO subfamily. [4Fe-4S] cluster is required as a cofactor.

It localises to the cytoplasm. It catalyses the reaction L-aspartate(89)-[ribosomal protein uS12]-hydrogen + (sulfur carrier)-SH + AH2 + 2 S-adenosyl-L-methionine = 3-methylsulfanyl-L-aspartate(89)-[ribosomal protein uS12]-hydrogen + (sulfur carrier)-H + 5'-deoxyadenosine + L-methionine + A + S-adenosyl-L-homocysteine + 2 H(+). Its function is as follows. Catalyzes the methylthiolation of an aspartic acid residue of ribosomal protein uS12. This is Ribosomal protein uS12 methylthiotransferase RimO from Shewanella sp. (strain W3-18-1).